We begin with the raw amino-acid sequence, 226 residues long: NEDD8-specific protease 1 (226 aa).

This sequence belongs to the peptidase C48 family.

Its function is as follows. Processes the pre-form of the ubiquitin-like protein NEDD8/RUB1. Has the capacity to discriminate between NEDD8/RUB1 and ubiquitin. Has no SUMO protease activity. The protein is NEDD8-specific protease 1 (NEDP1) of Arabidopsis thaliana (Mouse-ear cress).